We begin with the raw amino-acid sequence, 123 residues long: Ribonuclease P protein component (123 aa).

The protein belongs to the RnpA family. As to quaternary structure, consists of a catalytic RNA component (M1 or rnpB) and a protein subunit.

The enzyme catalyses Endonucleolytic cleavage of RNA, removing 5'-extranucleotides from tRNA precursor.. Functionally, RNaseP catalyzes the removal of the 5'-leader sequence from pre-tRNA to produce the mature 5'-terminus. It can also cleave other RNA substrates such as 4.5S RNA. The protein component plays an auxiliary but essential role in vivo by binding to the 5'-leader sequence and broadening the substrate specificity of the ribozyme. This Streptococcus pneumoniae serotype 4 (strain ATCC BAA-334 / TIGR4) protein is Ribonuclease P protein component.